A 226-amino-acid polypeptide reads, in one-letter code: ATP synthase subunit a (226 aa).

The next 6 helical transmembrane spans lie at 22–42 (SMNWLFMMLPIIIFPSIFWLI), 73–93 (IIIFISLMLYIMITNIFSLIP), 102–122 (LLLNMILSLTLWFSFLIYLIY), 135–155 (LNSPVFLMNFMVIIELISLII), 173–193 (LILTLLGIFISNFISILPINL), and 202–222 (LEIFMSMIQSYVFSILLILYF).

The protein belongs to the ATPase A chain family. F-type ATPases have 2 components, CF(1) - the catalytic core - and CF(0) - the membrane proton channel. CF(1) has five subunits: alpha(3), beta(3), gamma(1), delta(1), epsilon(1). CF(0) has three main subunits: a, b and c.

The protein localises to the mitochondrion inner membrane. Mitochondrial membrane ATP synthase (F(1)F(0) ATP synthase or Complex V) produces ATP from ADP in the presence of a proton gradient across the membrane which is generated by electron transport complexes of the respiratory chain. F-type ATPases consist of two structural domains, F(1) - containing the extramembraneous catalytic core and F(0) - containing the membrane proton channel, linked together by a central stalk and a peripheral stalk. During catalysis, ATP synthesis in the catalytic domain of F(1) is coupled via a rotary mechanism of the central stalk subunits to proton translocation. Key component of the proton channel; it may play a direct role in the translocation of protons across the membrane. In Apis mellifera ligustica (Common honeybee), this protein is ATP synthase subunit a (ATP6).